The primary structure comprises 227 residues: DNA repair protein RecO (227 aa).

Belongs to the RecO family.

Functionally, involved in DNA repair and RecF pathway recombination. This Pseudomonas savastanoi pv. phaseolicola (strain 1448A / Race 6) (Pseudomonas syringae pv. phaseolicola (strain 1448A / Race 6)) protein is DNA repair protein RecO.